A 1214-amino-acid chain; its full sequence is Ubiquitin carboxyl-terminal hydrolase 36 (1214 aa).

A disordered region spans residues 124–169; that stretch reads AVGSNGHDNNTVNGGTVNGNRKQTVDSGQSNQNSSANPNELPKPKR. Residues 132 to 143 show a composition bias toward low complexity; that stretch reads NNTVNGGTVNGN. Over residues 144–161 the composition is skewed to polar residues; sequence RKQTVDSGQSNQNSSANP. The 311-residue stretch at 192–502 folds into the USP domain; sequence AGMLNVGNTC…NAYIMFYELD (311 aa). Catalysis depends on Cys-201, which acts as the Nucleophile. Residue His-461 is the Proton acceptor of the active site. The span at 509-523 shows a compositional bias: low complexity; the sequence is SSTINNNSSSSSNNS. Residues 509 to 532 form a disordered region; it reads SSTINNNSSSSSNNSVAPKLNGLR. Phosphoserine occurs at positions 553 and 555. 5 disordered regions span residues 631–819, 836–964, 977–1001, 1048–1161, and 1176–1214; these read GEAA…KQKT, HRIA…ASKS, QKLL…SESV, HGDT…PNFQ, and KFQQ…QQQS. Positions 633 to 651 are enriched in low complexity; that stretch reads AAPNANTNANANKSSCNNN. Over residues 666–685 the composition is skewed to acidic residues; it reads SDEDEDEDDSDDDDDDDDDD. Position 717 is a phosphothreonine (Thr-717). Phosphoserine occurs at positions 727 and 729. Composition is skewed to low complexity over residues 735 to 751 and 785 to 816; these read QQQQ…PQQL and KTNG…NSSK. The span at 856–868 shows a compositional bias: polar residues; the sequence is EQVQTEQGTKKLN. The span at 869-878 shows a compositional bias: low complexity; that stretch reads SASSASASKS. Ser-891 carries the post-translational modification Phosphoserine. A Phosphothreonine modification is found at Thr-894. At Ser-897 the chain carries Phosphoserine. Positions 915–942 are enriched in acidic residues; it reads DDDDEEDEEEDDVEADADQEDDDDEVVV. The residue at position 951 (Thr-951) is a Phosphothreonine. Residues 983-1001 show a composition bias toward polar residues; it reads SAKSAATTRPGNGYQSESV. The segment covering 1058–1076 has biased composition (low complexity); it reads NSSSNNSSNINSNSNSNSN. The segment covering 1089 to 1098 has biased composition (basic and acidic residues); sequence EAREQRKRDA. Low complexity-rich tracts occupy residues 1178-1188 and 1197-1214; these read QQQRALQRHLA and QQQS…QQQS.

It belongs to the peptidase C19 family. As to quaternary structure, interacts with atms/PAF1, but not with CycT.

It is found in the nucleus. It localises to the nucleolus. It catalyses the reaction Thiol-dependent hydrolysis of ester, thioester, amide, peptide and isopeptide bonds formed by the C-terminal Gly of ubiquitin (a 76-residue protein attached to proteins as an intracellular targeting signal).. Required for maintaining multiple types of adult stem cells, including male and female germline, epithelial follicle cell and intestinal stem cells. May function as a transcriptional repressor by continually deubiquiting histone H2B at the promoters of genes critical for cellular differentiation, thereby preventing histone H3 'Lys-4' trimethylation (H3K4). Controls selective autophagy activation by ubiquitinated proteins. The protein is Ubiquitin carboxyl-terminal hydrolase 36 (Usp36) of Drosophila virilis (Fruit fly).